Here is a 484-residue protein sequence, read N- to C-terminus: Arginine ADP-riboxanase OspC3 (484 aa).

Residues His-143, Gln-144, Ser-145, Asn-155, Lys-157, Thr-169, Asn-172, and Thr-173 each coordinate NAD(+). Residue Glu-326 is part of the active site. ANK repeat units lie at residues 369 to 398 (MAHQALAYSLGNKKADIALYLLSKFNFTKQ), 413 to 444 (NLYDVEYLLSKDGANYKVLEYFINNGLVDVNK), and 451 to 480 (SGDTMLDNAMKSKDSKMIDFLLKNGAILGK).

It belongs to the OspC family. In terms of assembly, interacts with host calmodulin (CALM1, CALM2 and/or CALM3); specifically interacts with the apo form of calmodulin, preventing calcium-binding.

It is found in the secreted. The protein localises to the host cytoplasm. The catalysed reaction is L-arginyl-[protein] + NAD(+) = ADP-riboxanated L-argininyl-[protein] + nicotinamide + NH4(+) + H(+). With respect to regulation, interaction with host calmodulin (CALM1, CALM2 and/or CALM3) is required to mediate arginine ADP-riboxanation of host caspases. In terms of biological role, ADP-riboxanase effector that inhibits host cell pyroptosis. Acts by mediating arginine ADP-riboxanation of host CASP4/CASP11, blocking CASP4/CASP11 autoprocessing. This prevents CASP4 activation and ability to recognize and cleave GSDMD, thereby inhibiting LPS-induced pyroptosis. ADP-riboxanation takes place in two steps: OspC3 first catalyzes ADP-ribosylation of target Arg, and then initiates a deamination to remove one N-omega group. Independently of its ADP-riboxanase activity, acts as an inhibitor of calcium signaling by inhibiting host calmodulin, preventing activation of the JAK-STAT signaling pathway in response to interferon-beta. Mechanistically, acts by binding to the apo form of calmodulin, preventing calcium-binding and ability to activate host CaMK2 (CAMKII), which is required to stimulate the JAK-STAT signaling pathway in response to interferon-beta. The chain is Arginine ADP-riboxanase OspC3 from Shigella flexneri.